The primary structure comprises 466 residues: Alpha-galacturonidase (466 aa).

An NAD(+)-binding site is contributed by Val-11 to Thr-78. Asn-157 contacts substrate. Cys-179 contributes to the Mn(2+) binding site. The active-site Proton donor is His-180. His-216 contributes to the Mn(2+) binding site.

It belongs to the glycosyl hydrolase 4 family. Homotetramer. It depends on NAD(+) as a cofactor. Mn(2+) is required as a cofactor.

The enzyme catalyses [(1-&gt;4)-alpha-D-galacturonosyl](n) + H2O = alpha-D-galacturonate + [(1-&gt;4)-alpha-D-galacturonosyl](n-1). Alpha-galacturonidase able to catalyze the hydrolysis of the chromogenic substrate p-nitrophenyl-alpha-D-galacturonic acid (pNPalphaGalUA). It is probable that alpha-1,4-di-galacturonate (GalUA(2)) is the naturally occurring substrate. This Lachnoclostridium phytofermentans (strain ATCC 700394 / DSM 18823 / ISDg) (Clostridium phytofermentans) protein is Alpha-galacturonidase.